The sequence spans 295 residues: Giardin subunit alpha-1 (295 aa).

Annexin repeat units follow at residues 2-71 (PKVT…MDLF), 73-143 (DRHE…MEKW), 153-223 (GSPE…AHFA), and 226-293 (GMHR…TLWR).

It belongs to the annexin family. Giardin subunit alpha subfamily.

It localises to the cytoplasm. Its subcellular location is the cytoskeleton. In terms of biological role, giardins are involved in parasite attachment to the intestinal mucosa and in the cytoskeletal disassembly and reassembly that marks the transition from infectious trophozoite to transmissible cyst. They may interact with other cytoskeletal proteins such as microtubules in the microribbons or crossbridges, to maintain the integrity of the ventral disk. The sequence is that of Giardin subunit alpha-1 from Giardia intestinalis (Giardia lamblia).